A 295-amino-acid polypeptide reads, in one-letter code: Bifunctional protein FolD (295 aa).

Residues 166–168 (GRS), Ser-195, and Ile-236 each bind NADP(+).

This sequence belongs to the tetrahydrofolate dehydrogenase/cyclohydrolase family. As to quaternary structure, homodimer.

The enzyme catalyses (6R)-5,10-methylene-5,6,7,8-tetrahydrofolate + NADP(+) = (6R)-5,10-methenyltetrahydrofolate + NADPH. It catalyses the reaction (6R)-5,10-methenyltetrahydrofolate + H2O = (6R)-10-formyltetrahydrofolate + H(+). The protein operates within one-carbon metabolism; tetrahydrofolate interconversion. Catalyzes the oxidation of 5,10-methylenetetrahydrofolate to 5,10-methenyltetrahydrofolate and then the hydrolysis of 5,10-methenyltetrahydrofolate to 10-formyltetrahydrofolate. The protein is Bifunctional protein FolD of Chlorobium phaeobacteroides (strain DSM 266 / SMG 266 / 2430).